A 440-amino-acid polypeptide reads, in one-letter code: Argininosuccinate lyase (440 aa).

Belongs to the lyase 1 family. Argininosuccinate lyase subfamily.

The protein localises to the cytoplasm. It catalyses the reaction 2-(N(omega)-L-arginino)succinate = fumarate + L-arginine. It functions in the pathway amino-acid biosynthesis; L-arginine biosynthesis; L-arginine from L-ornithine and carbamoyl phosphate: step 3/3. This chain is Argininosuccinate lyase, found in Clostridium botulinum (strain Kyoto / Type A2).